Reading from the N-terminus, the 310-residue chain is Tyrosine recombinase XerC (310 aa).

The region spanning 11-97 (NSLQKPLERF…SLRSFFDFLI (87 aa)) is the Core-binding (CB) domain. A Tyr recombinase domain is found at 118-298 (PLPKNLDVDE…DFQHLAQAYD (181 aa)). Active-site residues include arginine 157, lysine 181, histidine 250, arginine 253, and histidine 276. The active-site O-(3'-phospho-DNA)-tyrosine intermediate is tyrosine 285.

Belongs to the 'phage' integrase family. XerC subfamily. As to quaternary structure, forms a cyclic heterotetrameric complex composed of two molecules of XerC and two molecules of XerD.

The protein resides in the cytoplasm. Site-specific tyrosine recombinase, which acts by catalyzing the cutting and rejoining of the recombining DNA molecules. The XerC-XerD complex is essential to convert dimers of the bacterial chromosome into monomers to permit their segregation at cell division. It also contributes to the segregational stability of plasmids. This chain is Tyrosine recombinase XerC, found in Vibrio parahaemolyticus serotype O3:K6 (strain RIMD 2210633).